Consider the following 362-residue polypeptide: Chorismate synthase (362 aa).

NADP(+)-binding residues include arginine 47 and arginine 53. FMN-binding positions include 124–126, glycine 285, 300–304, and arginine 326; these read RSS and KPTAT.

This sequence belongs to the chorismate synthase family. As to quaternary structure, homotetramer. FMNH2 is required as a cofactor.

It carries out the reaction 5-O-(1-carboxyvinyl)-3-phosphoshikimate = chorismate + phosphate. The protein operates within metabolic intermediate biosynthesis; chorismate biosynthesis; chorismate from D-erythrose 4-phosphate and phosphoenolpyruvate: step 7/7. In terms of biological role, catalyzes the anti-1,4-elimination of the C-3 phosphate and the C-6 proR hydrogen from 5-enolpyruvylshikimate-3-phosphate (EPSP) to yield chorismate, which is the branch point compound that serves as the starting substrate for the three terminal pathways of aromatic amino acid biosynthesis. This reaction introduces a second double bond into the aromatic ring system. The polypeptide is Chorismate synthase (Cyanothece sp. (strain PCC 7425 / ATCC 29141)).